The chain runs to 247 residues: Protein lin-28 homolog B (247 aa).

The tract at residues 1–22 is disordered; that stretch reads MAEGGASKGEEPEKLPGLAEDE. The CSD domain maps to 27–100; the sequence is HGTGHCKWFN…GLESIRVTGP (74 aa). Ser94, Ser103, and Ser108 each carry phosphoserine. The tract at residues 96 to 124 is disordered; sequence RVTGPGGSPCLGSERRPKGKTLQKRKPKG. Residues 112-123 show a composition bias toward basic residues; that stretch reads PKGKTLQKRKPK. CCHC-type zinc fingers lie at residues 125 to 142 and 147 to 164; these read DRCY…ECSL and KKCH…NCPH. Zn(2+)-binding residues include Cys127, Cys130, His135, Cys140, Cys149, Cys152, His157, and Cys162. Polar residues predominate over residues 173-186; the sequence is SSQGRQEAESQPCS. A disordered region spans residues 173–247; the sequence is SSQGRQEAES…GPLIQKRKKT (75 aa). Residues 207–219 show a composition bias toward basic and acidic residues; sequence VKSEMAEHSDRSP.

It belongs to the lin-28 family.

It localises to the nucleus. It is found in the nucleolus. Its function is as follows. Suppressor of microRNA (miRNA) biogenesis, including that of let-7 and possibly of miR107, miR-143 and miR-200c. Binds primary let-7 transcripts (pri-let-7), including pri-let-7g and pri-let-7a-1, and sequester them in the nucleolus, away from the microprocessor complex, hence preventing their processing into mature miRNA. Does not act on pri-miR21. The repression of let-7 expression is required for normal development and contributes to maintain the pluripotent state of embryonic stem cells by preventing let-7-mediated differentiation. When overexpressed, recruits ZCCHC11/TUT4 uridylyltransferase to pre-let-7 transcripts, leading to their terminal uridylation and degradation. This activity might not be relevant in vivo, as LIN28B-mediated inhibition of let-7 miRNA maturation appears to be ZCCHC11-independent. Interaction with target pre-miRNAs occurs via an 5'-GGAG-3' motif in the pre-miRNA terminal loop. Mediates MYC-induced let-7 repression. When overexpressed, may stimulate growth of carcinoma cell lines. The chain is Protein lin-28 homolog B (Lin28b) from Mus musculus (Mouse).